We begin with the raw amino-acid sequence, 168 residues long: Small ribosomal subunit protein uS5c (168 aa).

An S5 DRBM domain is found at 17 to 80 (WQERVVQIRR…SDGKKKIVSV (64 aa)).

It belongs to the universal ribosomal protein uS5 family. In terms of assembly, part of the 30S ribosomal subunit. Contacts protein S4.

The protein localises to the plastid. It is found in the chloroplast. With S4 and S12 plays an important role in translational accuracy. The polypeptide is Small ribosomal subunit protein uS5c (rps5) (Rhodomonas salina (Cryptomonas salina)).